The sequence spans 464 residues: Protein FAM90A23 (464 aa).

Disordered stretches follow at residues 1–42, 69–389, and 415–437; these read MMAR…DPRL, VPAT…HDGA, and HSPE…SEAP. Basic and acidic residues-rich tracts occupy residues 74 to 89 and 97 to 114; these read GKKE…KPRA and NKDK…DPQR. The span at 180-197 shows a compositional bias: low complexity; it reads LASLSPLRKASLSSSSSL.

Belongs to the FAM90 family.

In Homo sapiens (Human), this protein is Protein FAM90A23.